The sequence spans 231 residues: Ribonuclease HII (231 aa).

The 190-residue stretch at 38-227 (ELVAGGDEAG…IKSFYGQLKL (190 aa)) folds into the RNase H type-2 domain. Residues aspartate 44, glutamate 45, and aspartate 136 each coordinate a divalent metal cation.

The protein belongs to the RNase HII family. Requires Mn(2+) as cofactor. It depends on Mg(2+) as a cofactor.

It localises to the cytoplasm. It carries out the reaction Endonucleolytic cleavage to 5'-phosphomonoester.. Its function is as follows. Endonuclease that specifically degrades the RNA of RNA-DNA hybrids. The protein is Ribonuclease HII of Carboxydothermus hydrogenoformans (strain ATCC BAA-161 / DSM 6008 / Z-2901).